We begin with the raw amino-acid sequence, 1050 residues long: Zinc finger and BTB domain-containing protein 11 (1050 aa).

Residues 143–156 (LDSGEESNESEDDL) show a composition bias toward acidic residues. A disordered region spans residues 143-173 (LDSGEESNESEDDLSNFTSPPSTASKSSKKK). The segment covering 157 to 168 (SNFTSPPSTASK) has biased composition (low complexity). The 69-residue stretch at 214–282 (CDVTLLIEGE…AYTSVLSFDF (69 aa)) folds into the BTB domain. Disordered stretches follow at residues 373-514 (AEQN…EGGY) and 543-563 (LVQR…STEE). A compositionally biased stretch (low complexity) spans 378 to 399 (EPEQQPAPQASPEAEASVSPVE). Basic and acidic residues-rich tracts occupy residues 478–501 (SKDE…DTYR) and 553–563 (PKRDAKESTEE). 2 consecutive C2H2-type zinc fingers follow at residues 566–588 (HKCG…TLKH) and 594–616 (YKCP…LIRH). The interval 617–641 (TRKEAPTSSSSNSTSTEASGGSSEK) is disordered. The span at 623–638 (TSSSSNSTSTEASGGS) shows a compositional bias: low complexity. 10 consecutive C2H2-type zinc fingers follow at residues 648–670 (FICS…MLKH), 676–698 (HACQ…QSLH), 704–726 (FQCE…MSIH), 732–754 (YFCS…LKKH), 763–785 (YHCT…MNKH), 791–813 (FQCQ…VKSH), 819–843 (YRCN…KATH), 855–877 (RVCD…MNNH), 883–905 (FECL…VRTH), and 911–934 (YVCP…TKFH).

It is found in the nucleus. Its subcellular location is the nucleolus. Functionally, may be involved in transcriptional regulation. This chain is Zinc finger and BTB domain-containing protein 11, found in Mus musculus (Mouse).